The following is a 590-amino-acid chain: Aspartate--tRNA ligase (590 aa).

Glutamate 174 is an L-aspartate binding site. Residues 198–201 (QLMK) are aspartate. Arginine 220 is a binding site for L-aspartate. ATP is bound by residues 220 to 222 (RDE) and glutamine 229. Histidine 443 contacts L-aspartate. ATP is bound at residue glutamate 484. Residue arginine 491 coordinates L-aspartate. 536–539 (GLDR) contributes to the ATP binding site.

This sequence belongs to the class-II aminoacyl-tRNA synthetase family. Type 1 subfamily. In terms of assembly, homodimer.

It is found in the cytoplasm. The enzyme catalyses tRNA(Asp) + L-aspartate + ATP = L-aspartyl-tRNA(Asp) + AMP + diphosphate. Functionally, catalyzes the attachment of L-aspartate to tRNA(Asp) in a two-step reaction: L-aspartate is first activated by ATP to form Asp-AMP and then transferred to the acceptor end of tRNA(Asp). This is Aspartate--tRNA ligase from Lactococcus lactis subsp. cremoris (strain MG1363).